The primary structure comprises 119 residues: EF-hand calcium-binding domain-containing protein 2 (119 aa).

Residues 1 to 22 form the signal peptide; it reads MKVAVVLIVVLVVMMIGQETDS. The region spanning 82-117 is the EF-hand domain; the sequence is VDDNGFVEFKATYDVDGDGVVQVEEYETVVELTENL. Aspartate 95, aspartate 97, aspartate 99, and glutamate 106 together coordinate Ca(2+).

Component of the acid-soluble organic matrix of calcified layers of the shell (at protein level).

Its subcellular location is the secreted. The polypeptide is EF-hand calcium-binding domain-containing protein 2 (Lottia gigantea (Giant owl limpet)).